Reading from the N-terminus, the 344-residue chain is Ras association domain-containing protein 1 (344 aa).

The residue at position 2 (Ser2) is an N-acetylserine. Ser2 carries the phosphoserine modification. The mediates interaction with E4F1 stretch occupies residues 2–119 (SGEPELIELR…DLGWEPAVER (118 aa)). Arg36 carries the omega-N-methylarginine modification. Residues 51 to 105 (GHRFQPAGPATHTWCDLCGDFIWGVVRKGLQCARLSADCKFTCHYRCRALVCLDC) form a Phorbol-ester/DAG-type zinc finger. The span at 179–189 (SVPSSKKPPSL) shows a compositional bias: low complexity. Residues 179–203 (SVPSSKKPPSLQDARRGPGRGTSVR) form a disordered region. The 95-residue stretch at 198–292 (RGTSVRRRTS…LSFVLKENDS (95 aa)) folds into the Ras-associating domain. Positions 294 to 341 (EVNWDAFSMPELHNFLRILQREEEEHLRQILQKYSYCRQKIQEALHAC) constitute an SARAH domain. The segment at 315 to 318 (EEEE) is MOAP1-binding.

Interacts with MAP1S. Interacts with XPA. Binds to the N-terminal of CDC20 during prometaphase. Binds to STK3/MST2 and STK4/MST1. Recruited to the TNFRSF1A and TNFRSF10A complexes in response to their respective cognate ligand, after internalization. Can self-associate. Part of a complex with MDM2, DAXX, RASSF1 and USP7. Interacts with ECM2. In terms of assembly, interacts with MOAP1. Interacts with E4F1. Interacts with RSSF5 and probably associates with HRAS via a RSSF1 isoform A-RSSF5 heterodimer. Interacts (via C-terminus) with DAXX (via N-terminus); the interaction is independent of MDM2 and TP53. Interacts (via N-terminus) with MDM2 (via C-terminus); the interaction is independent of TP53. Interacts with RAB39A. Interacts with RAB39B; the interaction is weak. As to quaternary structure, interacts (via N-terminus) with DAXX. Interacts with RAB39B; the interaction is strong. Does not interact with RAB39A. Interacts (via N-terminus) with DAXX. In terms of tissue distribution, isoform A and isoform C are ubiquitously expressed in all tissues tested, however isoform A is absent in many corresponding cancer cell lines. Isoform B is mainly expressed in hematopoietic cells.

The protein localises to the cytoplasm. The protein resides in the cytoskeleton. It is found in the microtubule organizing center. It localises to the centrosome. Its subcellular location is the spindle. The protein localises to the spindle pole. The protein resides in the nucleus. Its function is as follows. Potential tumor suppressor. Required for death receptor-dependent apoptosis. Mediates activation of STK3/MST2 and STK4/MST1 during Fas-induced apoptosis by preventing their dephosphorylation. When associated with MOAP1, promotes BAX conformational change and translocation to mitochondrial membranes in response to TNF and TNFSF10 stimulation. Isoform A interacts with CDC20, an activator of the anaphase-promoting complex, APC, resulting in the inhibition of APC activity and mitotic progression. Inhibits proliferation by negatively regulating cell cycle progression at the level of G1/S-phase transition by regulating accumulation of cyclin D1 protein. Isoform C has been shown not to perform these roles, no function has been identified for this isoform. Isoform A disrupts interactions among MDM2, DAXX and USP7, thus contributing to the efficient activation of TP53 by promoting MDM2 self-ubiquitination in cell-cycle checkpoint control in response to DNA damage. The chain is Ras association domain-containing protein 1 from Homo sapiens (Human).